The sequence spans 128 residues: SLILLVAVQALTEEDLQLLRQTSAECKTESGASEAVIKKARKGDLEDDPKLKMQLLCIFKALEIVAESGEIEADTFKEKLTRVTNDDEESEKIVEKCTVTEDTPEDTAFEVTKCVLKDKPNFFGDLFV.

An N-terminal signal peptide occupies residues 1–10 (SLILLVAVQA). Disulfide bonds link cysteine 26-cysteine 57 and cysteine 97-cysteine 114.

The protein belongs to the PBP/GOBP family. N-glycosylated. As to expression, tubular accessory sex gland.

It is found in the secreted. Functionally, may be a carrier protein for lipids. The chain is B2 protein from Tenebrio molitor (Yellow mealworm beetle).